The sequence spans 147 residues: MAPSGPTPYSHRPQIKHYGTFLDCMRYTLNDESKVDDRCSDIHNSLAQSNVTSSMSVMNDSEEYPLINGPSMQAEDPKSVFYKVRKPDRSRDFSWQNLNSHGNSGLRREKYIRSSKRRWKNPEIFKVSLKCESIGAGNGIKISFSFF.

This is an uncharacterized protein from Gallid herpesvirus 2 (strain Chicken/Md5/ATCC VR-987) (GaHV-2).